A 493-amino-acid polypeptide reads, in one-letter code: GTPase Der (493 aa).

Residues 3 to 166 (PVIALVGRPN…EALGIFPKDN (164 aa)) enclose the EngA-type G 1 domain. GTP is bound by residues 9–16 (GRPNVGKS), 56–60 (DTGGI), and 118–121 (NKVD). The disordered stretch occupies residues 166 to 195 (NAEEEGEGEPASEEVAEGEEPTRIPGPSEK). Residues 167–184 (AEEEGEGEPASEEVAEGE) are compositionally biased toward acidic residues. The EngA-type G 2 domain occupies 198 to 371 (IKIAIIGRPN…SVQESFRSAV (174 aa)). GTP is bound by residues 204-211 (GRPNVGKS), 251-255 (DTAGV), and 316-319 (NKWD). The KH-like domain maps to 372 to 456 (TRWPTSRLTS…PIRIEYKGGE (85 aa)). Basic and acidic residues predominate over residues 454 to 463 (GGENPYEGKK). The disordered stretch occupies residues 454 to 493 (GGENPYEGKKNSLTARQVNKKRRLMSHHKKAEKKKKDKRR). Residues 471-493 (VNKKRRLMSHHKKAEKKKKDKRR) show a composition bias toward basic residues.

It belongs to the TRAFAC class TrmE-Era-EngA-EngB-Septin-like GTPase superfamily. EngA (Der) GTPase family. In terms of assembly, associates with the 50S ribosomal subunit.

Its function is as follows. GTPase that plays an essential role in the late steps of ribosome biogenesis. This Pseudomonas aeruginosa (strain ATCC 15692 / DSM 22644 / CIP 104116 / JCM 14847 / LMG 12228 / 1C / PRS 101 / PAO1) protein is GTPase Der.